Consider the following 350-residue polypeptide: tRNA uridine(34) hydroxylase (350 aa).

Residues 146–240 (DDPEAVFVDM…YARRAREQGL (95 aa)) form the Rhodanese domain. The Cysteine persulfide intermediate role is filled by Cys-200.

This sequence belongs to the TrhO family.

It carries out the reaction uridine(34) in tRNA + AH2 + O2 = 5-hydroxyuridine(34) in tRNA + A + H2O. Its function is as follows. Catalyzes oxygen-dependent 5-hydroxyuridine (ho5U) modification at position 34 in tRNAs. This Erwinia tasmaniensis (strain DSM 17950 / CFBP 7177 / CIP 109463 / NCPPB 4357 / Et1/99) protein is tRNA uridine(34) hydroxylase.